The following is a 697-amino-acid chain: Protein FAM13A (697 aa).

Disordered regions lie at residues 1–21, 52–112, and 133–229; these read MACEIMPLQSSQEDERPMSPF, HLFD…GFSN, and YIGE…QQES. Ser-19 bears the Phosphoserine mark. Low complexity predominate over residues 58–78; it reads SSGGQSSEDSESGASSSSSTS. Basic and acidic residues predominate over residues 86 to 103; that stretch reads AKEQDESRHSRDVGRLNK. Polar residues predominate over residues 146-169; the sequence is SSRLSELNENQDGLVNMENLNPTP. The span at 170 to 197 shows a compositional bias: basic and acidic residues; that stretch reads SHERTGSDHVELISDGSKENEKDGRQSQ. A phosphoserine mark is found at Ser-271 and Ser-291. Disordered regions lie at residues 307 to 338 and 398 to 433; these read TEMPPSPPNSHPFMRRRSSSLGSYEDEQEDLT and LKISEEDLPPRMRQRSNTLPKSFGSQLEKEDEKKQE. Basic and acidic residues predominate over residues 398-407; that stretch reads LKISEEDLPP. At Ser-401 the chain carries Phosphoserine. A compositionally biased stretch (polar residues) spans 412-422; the sequence is RSNTLPKSFGS. The span at 424–433 shows a compositional bias: basic and acidic residues; the sequence is LEKEDEKKQE.

Belongs to the FAM13 family.

This is Protein FAM13A (FAM13A) from Bos taurus (Bovine).